Here is a 335-residue protein sequence, read N- to C-terminus: Dihydroorotate dehydrogenase (quinone) (335 aa).

FMN is bound by residues 59 to 63 and T83; that span reads AGLDK. K63 lines the substrate pocket. 108-112 contributes to the substrate binding site; that stretch reads NRMGF. The FMN site is built by N136 and N169. N169 serves as a coordination point for substrate. The active-site Nucleophile is the S172. N174 lines the substrate pocket. Residues K214 and T242 each contribute to the FMN site. 243–244 serves as a coordination point for substrate; it reads NT. Residues G265, G294, and 315–316 contribute to the FMN site; that span reads YS.

Belongs to the dihydroorotate dehydrogenase family. Type 2 subfamily. In terms of assembly, monomer. Requires FMN as cofactor.

It is found in the cell membrane. It catalyses the reaction (S)-dihydroorotate + a quinone = orotate + a quinol. It functions in the pathway pyrimidine metabolism; UMP biosynthesis via de novo pathway; orotate from (S)-dihydroorotate (quinone route): step 1/1. In terms of biological role, catalyzes the conversion of dihydroorotate to orotate with quinone as electron acceptor. This Neisseria meningitidis serogroup C / serotype 2a (strain ATCC 700532 / DSM 15464 / FAM18) protein is Dihydroorotate dehydrogenase (quinone).